A 1114-amino-acid polypeptide reads, in one-letter code: Kinesin-like protein KIN-12B (1114 aa).

The tract at residues 1–119 (MRSLFSSKLS…GGGGGDSGVQ (119 aa)) is disordered. Residues 98–107 (SAASPAPEGA) are compositionally biased toward low complexity. Residues 117 to 459 (GVQVVVRVRP…LRFAHRAKDI (343 aa)) form the Kinesin motor domain. An ATP-binding site is contributed by 197 to 204 (GQTGSGKT). Coiled coils occupy residues 772–810 (VLSA…KNQL) and 999–1043 (ELLV…DQEV). Polar residues predominate over residues 1055-1065 (LPSNVVQSPEP). The interval 1055–1081 (LPSNVVQSPEPSETGPARYDTGGSFGD) is disordered.

This sequence belongs to the TRAFAC class myosin-kinesin ATPase superfamily. Kinesin family. KIN-12 subfamily.

This is Kinesin-like protein KIN-12B from Oryza sativa subsp. japonica (Rice).